Consider the following 546-residue polypeptide: Amidase FG08078 (546 aa).

Catalysis depends on charge relay system residues lysine 129 and serine 204. Catalysis depends on serine 228, which acts as the Acyl-ester intermediate.

Belongs to the amidase family.

It functions in the pathway mycotoxin biosynthesis. Functionally, amidase; part of the gene cluster that mediates the biosynthesis of butenolide, a mycotoxin that shows antibiotic activity but does not seem to play a major role in the spread of head blight in wheat. Butenolide is derived from glutamic acid via a 4-acetamido-2-butenoic acid intermediate. The predicted function of the NADH:flavin oxidoreductase FG08077, the cytochrome P450 monooxygenase FG08079, the decarboxylase FG08083, and the putative acetyltransferase FG08082 are consistent with this pathway, however, the respective activities of the butelonide biosynthesis cluster enzymes have still to be experimentally determined. The polypeptide is Amidase FG08078 (Gibberella zeae (strain ATCC MYA-4620 / CBS 123657 / FGSC 9075 / NRRL 31084 / PH-1) (Wheat head blight fungus)).